The primary structure comprises 129 residues: uncharacterized protein (129 aa).

Positions 1-27 (MLMRKKKLLSRISFGSLFLLCGTILSA) are cleaved as a signal peptide. A lipid anchor (N-palmitoyl cysteine) is attached at C28. C28 is lipidated: S-diacylglycerol cysteine.

The protein belongs to the MG439/MG440 family.

Its subcellular location is the cell membrane. This is an uncharacterized protein from Mycoplasma pneumoniae (strain ATCC 29342 / M129 / Subtype 1) (Mycoplasmoides pneumoniae).